Consider the following 304-residue polypeptide: Glutaminase (304 aa).

S63, N114, E158, N165, Y189, Y240, and V258 together coordinate substrate.

It belongs to the glutaminase family. As to quaternary structure, homotetramer.

The catalysed reaction is L-glutamine + H2O = L-glutamate + NH4(+). In Shewanella amazonensis (strain ATCC BAA-1098 / SB2B), this protein is Glutaminase.